The sequence spans 345 residues: UDP-N-acetylenolpyruvoylglucosamine reductase (345 aa).

The FAD-binding PCMH-type domain maps to 15–218; that stretch reads VDVYAEKVII…NTIIFLRYKK (204 aa). The active site involves Arg161. Ser230 (proton donor) is an active-site residue. The active site involves Glu327.

Belongs to the MurB family. It depends on FAD as a cofactor.

It localises to the cytoplasm. It catalyses the reaction UDP-N-acetyl-alpha-D-muramate + NADP(+) = UDP-N-acetyl-3-O-(1-carboxyvinyl)-alpha-D-glucosamine + NADPH + H(+). Its pathway is cell wall biogenesis; peptidoglycan biosynthesis. Cell wall formation. This Blochmanniella floridana protein is UDP-N-acetylenolpyruvoylglucosamine reductase.